The sequence spans 553 residues: Probable cytochrome P450 301a1, mitochondrial (553 aa).

Residue cysteine 502 coordinates heme.

The protein belongs to the cytochrome P450 family. Heme is required as a cofactor.

It is found in the mitochondrion membrane. The protein is Probable cytochrome P450 301a1, mitochondrial (Cyp301a1) of Drosophila melanogaster (Fruit fly).